We begin with the raw amino-acid sequence, 145 residues long: Large ribosomal subunit protein uL16 (145 aa).

The span at 76–95 (PKTKTPAETRMGKGKGEPEH) shows a compositional bias: basic and acidic residues. The segment at 76–97 (PKTKTPAETRMGKGKGEPEHFV) is disordered.

This sequence belongs to the universal ribosomal protein uL16 family. Part of the 50S ribosomal subunit.

In terms of biological role, binds 23S rRNA and is also seen to make contacts with the A and possibly P site tRNAs. In Salinibacter ruber (strain DSM 13855 / M31), this protein is Large ribosomal subunit protein uL16.